Reading from the N-terminus, the 320-residue chain is Glucokinase (320 aa).

12-17 provides a ligand contact to ATP; sequence GDIGGT.

It belongs to the bacterial glucokinase family.

It localises to the cytoplasm. It catalyses the reaction D-glucose + ATP = D-glucose 6-phosphate + ADP + H(+). The polypeptide is Glucokinase (Nitrobacter hamburgensis (strain DSM 10229 / NCIMB 13809 / X14)).